The following is a 388-amino-acid chain: Probable proton-coupled zinc antiporter SLC30A3 (388 aa).

Positions 1 to 42 are disordered; that stretch reads MEPSPASGGSETTRLVSPRDRSSAGGGLRLKSLFTEPSEPLP. Topologically, residues 1 to 75 are cytoplasmic; that stretch reads MEPSPASGGS…SPERAQARRQ (75 aa). Phosphoserine is present on residues serine 63 and serine 66. A helical transmembrane segment spans residues 76–96; it reads LYAACVVCFIFMAGEVVGGYL. Residues 97 to 105 lie on the Lumenal side of the membrane; sequence AHSLAIMTD. Residues 106 to 126 traverse the membrane as a helical segment; the sequence is AAHLLADIGSMMASLFSLWLS. Zn(2+) is bound by residues histidine 108 and aspartate 112. Over 127 to 145 the chain is Cytoplasmic; it reads TRPATRTMTFGWHRSETLG. The helical transmembrane segment at 146-166 threads the bilayer; it reads ALASVVSLWIVTGILLYLAFL. The Lumenal segment spans residues 167–177; sequence RLLHSDYHIEA. The chain crosses the membrane as a helical span at residues 178–198; the sequence is GAMLLTASIAVCANMIMAFVL. The Cytoplasmic segment spans residues 199 to 235; sequence HQTGAPHSHGPRGAEYAPLEEGHGHPLSLGNTSVRAA. The helical transmembrane segment at 236–256 threads the bilayer; the sequence is FVHVLGDLLQSLGVLAASILI. Zn(2+)-binding residues include histidine 238 and aspartate 242. The Lumenal segment spans residues 257–263; sequence YFKPQYK. Residues 264–284 form a helical membrane-spanning segment; that stretch reads VADPISTFLFSICALGSTAPT. Residues 285 to 388 lie on the Cytoplasmic side of the membrane; that stretch reads LRDVLLVLME…CLRCREPPKA (104 aa).

It belongs to the cation diffusion facilitator (CDF) transporter (TC 2.A.4) family. SLC30A subfamily. Homodimer. Homodimerization could regulate efficiency of zinc transport. Interacts with TMEM163.

It is found in the cytoplasmic vesicle. Its subcellular location is the secretory vesicle. It localises to the synaptic vesicle membrane. The protein localises to the synapse. The protein resides in the synaptosome. It is found in the late endosome membrane. Its subcellular location is the lysosome membrane. It carries out the reaction Zn(2+)(in) + 2 H(+)(out) = Zn(2+)(out) + 2 H(+)(in). Its function is as follows. Probable proton-coupled zinc ion antiporter mediating the import of zinc from cytoplasm into synaptic vesicles and participating to cellular zinc ion homeostasis in the brain. This Rattus norvegicus (Rat) protein is Probable proton-coupled zinc antiporter SLC30A3.